Here is a 244-residue protein sequence, read N- to C-terminus: tRNA pseudouridine synthase A (244 aa).

Asp-52 functions as the Nucleophile in the catalytic mechanism. Residue Tyr-110 coordinates substrate.

The protein belongs to the tRNA pseudouridine synthase TruA family. As to quaternary structure, homodimer.

It carries out the reaction uridine(38/39/40) in tRNA = pseudouridine(38/39/40) in tRNA. Formation of pseudouridine at positions 38, 39 and 40 in the anticodon stem and loop of transfer RNAs. The chain is tRNA pseudouridine synthase A from Clostridium botulinum (strain Eklund 17B / Type B).